The sequence spans 227 residues: Cytochrome c oxidase subunit 2 (227 aa).

Over 1–14 (MAYPMQLGFQDATS) the chain is Mitochondrial intermembrane. The chain crosses the membrane as a helical span at residues 15–45 (PIMEELLHFHDHTLMIVFLISSLVLYIISLM). Residues 46 to 59 (LTTKLTHTSTMDAQ) lie on the Mitochondrial matrix side of the membrane. A helical membrane pass occupies residues 60–87 (EVETIWTILPAIILILIALPSLRILYMM). At 88–227 (DEINNPSLTV…YFEKWSASML (140 aa)) the chain is on the mitochondrial intermembrane side. Residues histidine 161, cysteine 196, glutamate 198, cysteine 200, histidine 204, and methionine 207 each contribute to the Cu cation site. Glutamate 198 lines the Mg(2+) pocket. Tyrosine 218 is modified (phosphotyrosine).

The protein belongs to the cytochrome c oxidase subunit 2 family. In terms of assembly, component of the cytochrome c oxidase (complex IV, CIV), a multisubunit enzyme composed of 14 subunits. The complex is composed of a catalytic core of 3 subunits MT-CO1, MT-CO2 and MT-CO3, encoded in the mitochondrial DNA, and 11 supernumerary subunits COX4I, COX5A, COX5B, COX6A, COX6B, COX6C, COX7A, COX7B, COX7C, COX8 and NDUFA4, which are encoded in the nuclear genome. The complex exists as a monomer or a dimer and forms supercomplexes (SCs) in the inner mitochondrial membrane with NADH-ubiquinone oxidoreductase (complex I, CI) and ubiquinol-cytochrome c oxidoreductase (cytochrome b-c1 complex, complex III, CIII), resulting in different assemblies (supercomplex SCI(1)III(2)IV(1) and megacomplex MCI(2)III(2)IV(2)). Found in a complex with TMEM177, COA6, COX18, COX20, SCO1 and SCO2. Interacts with TMEM177 in a COX20-dependent manner. Interacts with COX20. Interacts with COX16. Cu cation serves as cofactor.

It localises to the mitochondrion inner membrane. The enzyme catalyses 4 Fe(II)-[cytochrome c] + O2 + 8 H(+)(in) = 4 Fe(III)-[cytochrome c] + 2 H2O + 4 H(+)(out). Its function is as follows. Component of the cytochrome c oxidase, the last enzyme in the mitochondrial electron transport chain which drives oxidative phosphorylation. The respiratory chain contains 3 multisubunit complexes succinate dehydrogenase (complex II, CII), ubiquinol-cytochrome c oxidoreductase (cytochrome b-c1 complex, complex III, CIII) and cytochrome c oxidase (complex IV, CIV), that cooperate to transfer electrons derived from NADH and succinate to molecular oxygen, creating an electrochemical gradient over the inner membrane that drives transmembrane transport and the ATP synthase. Cytochrome c oxidase is the component of the respiratory chain that catalyzes the reduction of oxygen to water. Electrons originating from reduced cytochrome c in the intermembrane space (IMS) are transferred via the dinuclear copper A center (CU(A)) of subunit 2 and heme A of subunit 1 to the active site in subunit 1, a binuclear center (BNC) formed by heme A3 and copper B (CU(B)). The BNC reduces molecular oxygen to 2 water molecules using 4 electrons from cytochrome c in the IMS and 4 protons from the mitochondrial matrix. The protein is Cytochrome c oxidase subunit 2 (MT-CO2) of Boselaphus tragocamelus (Nilgai).